Here is a 123-residue protein sequence, read N- to C-terminus: Transmembrane protein 254 (123 aa).

3 consecutive transmembrane segments (helical) span residues 15-35 (LFWFTVITVSFGYYTWAVFWP), 63-83 (NGYWLAWLIHVGESLYALVLC), and 95-115 (LLWFLQTFLFGVASLSILIAY).

The protein resides in the membrane. This is Transmembrane protein 254 from Mus musculus (Mouse).